A 422-amino-acid chain; its full sequence is Secernin-3 (422 aa).

Positions 1 to 5 (MEPCS) are excised as a propeptide. The active site involves C6. C6 is modified (glyoxylic acid (Cys); alternate). Pyruvic acid (Cys); alternate is present on C6.

It belongs to the peptidase C69 family. Secernin subfamily.

Plays a role in thermal nociception. This Bos taurus (Bovine) protein is Secernin-3 (SCRN3).